The chain runs to 460 residues: MTDKLWGGRFTEKAAHWVDAFGASIGFDQQMAQEDLEGSLAHVKMLGKTGIIPQADADTITAGLQHLQKELAAGKLHFTVENEDIHLNMEALLTAEIGPVAGKLHTARSRNDQVATDLHLWLKHRLPTIKEALTNLQTVLVGQAKVHAATIMPGYTHMQHAQPITYGHYLLAYFEMFQRDWERFDFTQKHTDILPLGAAALAGTTFPIDRTLVAQELGFDQIYHNSLDAVSDRDFALEFLSNSAILMQHLSRMAEELILWSTYEFNYIELGDDFSTGSSIMPQKKNPDFAELIRGKTGRVYGALMGLLTTMKAIPLAYNKDMQEDKEPIFDAYNTILGSLHIFTGMLSDLTVHEKRMAEATTHDFSNATELADYLATKGVPFRQAHAIVGELVLKGIKTNTALQEMPLSELQAAAPQIQQDVYAELTSKAAVDRRTSLGGTAVSNVLKEVARDEEMIASH.

The protein belongs to the lyase 1 family. Argininosuccinate lyase subfamily.

The protein resides in the cytoplasm. It catalyses the reaction 2-(N(omega)-L-arginino)succinate = fumarate + L-arginine. It participates in amino-acid biosynthesis; L-arginine biosynthesis; L-arginine from L-ornithine and carbamoyl phosphate: step 3/3. The sequence is that of Argininosuccinate lyase from Lacticaseibacillus paracasei (strain ATCC 334 / BCRC 17002 / CCUG 31169 / CIP 107868 / KCTC 3260 / NRRL B-441) (Lactobacillus paracasei).